A 109-amino-acid polypeptide reads, in one-letter code: Iron-sulfur cluster assembly protein CyaY (109 aa).

It belongs to the frataxin family.

Its function is as follows. Involved in iron-sulfur (Fe-S) cluster assembly. May act as a regulator of Fe-S biogenesis. The polypeptide is Iron-sulfur cluster assembly protein CyaY (Bordetella bronchiseptica (strain ATCC BAA-588 / NCTC 13252 / RB50) (Alcaligenes bronchisepticus)).